Reading from the N-terminus, the 862-residue chain is Bifunctional uridylyltransferase/uridylyl-removing enzyme (862 aa).

Residues 1–328 form a uridylyltransferase region; sequence MSTAAIPTDA…FPRRAGAAIV (328 aa). The tract at residues 329-685 is uridylyl-removing; it reads INERFQAVRE…ARVSDADQGV (357 aa). Residues 447–563 enclose the HD domain; the sequence is VDQHIMMVLR…GRFADTVGTE (117 aa). ACT domains follow at residues 686–765 and 794–862; these read QVMV…DRPS and ILSL…RLHI.

Belongs to the GlnD family. It depends on Mg(2+) as a cofactor.

The catalysed reaction is [protein-PII]-L-tyrosine + UTP = [protein-PII]-uridylyl-L-tyrosine + diphosphate. The enzyme catalyses [protein-PII]-uridylyl-L-tyrosine + H2O = [protein-PII]-L-tyrosine + UMP + H(+). With respect to regulation, uridylyltransferase (UTase) activity is inhibited by glutamine, while glutamine activates uridylyl-removing (UR) activity. Modifies, by uridylylation and deuridylylation, the PII regulatory proteins (GlnB and homologs), in response to the nitrogen status of the cell that GlnD senses through the glutamine level. Under low glutamine levels, catalyzes the conversion of the PII proteins and UTP to PII-UMP and PPi, while under higher glutamine levels, GlnD hydrolyzes PII-UMP to PII and UMP (deuridylylation). Thus, controls uridylylation state and activity of the PII proteins, and plays an important role in the regulation of nitrogen assimilation and metabolism. The chain is Bifunctional uridylyltransferase/uridylyl-removing enzyme from Aromatoleum aromaticum (strain DSM 19018 / LMG 30748 / EbN1) (Azoarcus sp. (strain EbN1)).